The chain runs to 283 residues: Bifunctional protein FolD (283 aa).

Residues 165 to 167, threonine 192, and valine 233 each bind NADP(+); that span reads GRG.

This sequence belongs to the tetrahydrofolate dehydrogenase/cyclohydrolase family. Homodimer.

It carries out the reaction (6R)-5,10-methylene-5,6,7,8-tetrahydrofolate + NADP(+) = (6R)-5,10-methenyltetrahydrofolate + NADPH. It catalyses the reaction (6R)-5,10-methenyltetrahydrofolate + H2O = (6R)-10-formyltetrahydrofolate + H(+). It functions in the pathway one-carbon metabolism; tetrahydrofolate interconversion. In terms of biological role, catalyzes the oxidation of 5,10-methylenetetrahydrofolate to 5,10-methenyltetrahydrofolate and then the hydrolysis of 5,10-methenyltetrahydrofolate to 10-formyltetrahydrofolate. The polypeptide is Bifunctional protein FolD (Thermobifida fusca (strain YX)).